A 136-amino-acid polypeptide reads, in one-letter code: Large ribosomal subunit protein uL16 (136 aa).

This sequence belongs to the universal ribosomal protein uL16 family. Part of the 50S ribosomal subunit.

In terms of biological role, binds 23S rRNA and is also seen to make contacts with the A and possibly P site tRNAs. The polypeptide is Large ribosomal subunit protein uL16 (Enterobacter sp. (strain 638)).